The chain runs to 314 residues: Dihydropteroate synthase (314 aa).

The region spanning 10–294 is the Pterin-binding domain; the sequence is TVICGIINVT…DVASHRMAVE (285 aa). Position 17 (Asn-17) interacts with Mg(2+). (7,8-dihydropterin-6-yl)methyl diphosphate-binding positions include Asp-91, Asn-110, Asp-201, Lys-237, and 282–284; that span reads RVH.

This sequence belongs to the DHPS family. Homodimer. Mg(2+) is required as a cofactor.

It catalyses the reaction (7,8-dihydropterin-6-yl)methyl diphosphate + 4-aminobenzoate = 7,8-dihydropteroate + diphosphate. It functions in the pathway cofactor biosynthesis; tetrahydrofolate biosynthesis; 7,8-dihydrofolate from 2-amino-4-hydroxy-6-hydroxymethyl-7,8-dihydropteridine diphosphate and 4-aminobenzoate: step 1/2. With respect to regulation, is potently inhibited by sulfonamides, with Ki values between 25 nM and 850 nM. Catalyzes the condensation of para-aminobenzoate (pABA) with 6-hydroxymethyl-7,8-dihydropterin diphosphate (DHPt-PP) to form 7,8-dihydropteroate, the immediate precursor of folate derivatives. Its function is as follows. Is the target for the sulfonamide group of antimicrobial drugs. Sulfonamide drugs act as pABA analogs, they inhibit the reaction by acting as alternative substrates, leading to a 'dead end' sulfa-pterin product. The sequence is that of Dihydropteroate synthase (sulA) from Streptococcus pneumoniae (strain ATCC BAA-255 / R6).